A 391-amino-acid chain; its full sequence is Probable acridone synthase 3 (391 aa).

Residue C164 is part of the active site.

The protein belongs to the thiolase-like superfamily. Chalcone/stilbene synthases family.

The catalysed reaction is N-methylanthraniloyl-CoA + 3 malonyl-CoA + 3 H(+) = 1,3-dihydroxy-N-methylacridone + 3 CO2 + 4 CoA + H2O. The chain is Probable acridone synthase 3 (ACS3) from Ruta graveolens (Common rue).